We begin with the raw amino-acid sequence, 129 residues long: uncharacterized protein (129 aa).

This is an uncharacterized protein from Bacillus subtilis (strain 168).